The following is a 266-amino-acid chain: Undecaprenyl-diphosphatase (266 aa).

Transmembrane regions (helical) follow at residues 4–24 (ILSAIILGIIQGITEFLPISS), 39–59 (LSIIFDIYLHLATVLVIIIYY), 86–106 (LKLILLILIITIVTGVVGTFI), 112–132 (MFTLSFVLINFIITGILILML), 145–165 (ILLAGIFMGLMQGLGALPGIS), 182–202 (KSAFEISFLSLIPIVFGAILL), 210–230 (IFMVLNFFEINLGALVAFVVG), and 246–266 (LYYFSIYLFALSIIVCYFVRI).

Belongs to the UppP family.

It localises to the cell inner membrane. It catalyses the reaction di-trans,octa-cis-undecaprenyl diphosphate + H2O = di-trans,octa-cis-undecaprenyl phosphate + phosphate + H(+). Its function is as follows. Catalyzes the dephosphorylation of undecaprenyl diphosphate (UPP). Confers resistance to bacitracin. This chain is Undecaprenyl-diphosphatase, found in Borreliella burgdorferi (strain ATCC 35210 / DSM 4680 / CIP 102532 / B31) (Borrelia burgdorferi).